Here is a 199-residue protein sequence, read N- to C-terminus: Large ribosomal subunit protein bL25 (199 aa).

The protein belongs to the bacterial ribosomal protein bL25 family. CTC subfamily. As to quaternary structure, part of the 50S ribosomal subunit; part of the 5S rRNA/L5/L18/L25 subcomplex. Contacts the 5S rRNA. Binds to the 5S rRNA independently of L5 and L18.

Functionally, this is one of the proteins that binds to the 5S RNA in the ribosome where it forms part of the central protuberance. The polypeptide is Large ribosomal subunit protein bL25 (Pelodictyon phaeoclathratiforme (strain DSM 5477 / BU-1)).